Here is a 593-residue protein sequence, read N- to C-terminus: ATPase family AAA domain-containing protein 3-B (593 aa).

Disordered regions lie at residues 1–64 (MSWL…LDQS), 109–129 (EEKR…AQYQ), and 145–164 (QLQN…KQEA). Topologically, residues 1–242 (MSWLFGLNRG…FRTFISDWDK (242 aa)) are mitochondrial intermembrane. Over residues 12–27 (PEPPGVPGFPEPPSPP) the composition is skewed to pro residues. 4 stretches are compositionally biased toward basic and acidic residues: residues 33–44 (GGDKNRPKDKWS), 53–64 (RAAKAARELDQS), 109–121 (EEKR…ETKQ), and 150–164 (ENLR…KQEA). Residues 51-215 (LERAAKAARE…QIRLKAAEHR (165 aa)) are a coiled coil. The chain crosses the membrane as a helical span at residues 243–260 (VTATVAGLTLLAVGVYTA). At 261–593 (KNGTGVAGRY…LQPLLEGTPV (333 aa)) the chain is on the mitochondrial matrix side. ATP is bound at residue 348-355 (GPPGTGKT). A compositionally biased stretch (basic and acidic residues) spans 570 to 580 (AEGKESTKEIG). The interval 570 to 593 (AEGKESTKEIGKNPLQPLLEGTPV) is disordered.

It belongs to the AAA ATPase family. As to quaternary structure, can form homooligomers. Homodimer formation at the N-terminus may be regulated by ATP and is required for the interaction with the inner surface of the mitochondrial outer membrane and correct mitochondrial homeostasis.

It localises to the mitochondrion inner membrane. It is found in the mitochondrion matrix. The protein resides in the mitochondrion nucleoid. The enzyme catalyses ATP + H2O = ADP + phosphate + H(+). Functionally, essential for mitochondrial network organization, mitochondrial metabolism and cell growth at organism and cellular level. May play an important role in mitochondrial protein synthesis. May also participate in mitochondrial DNA replication. May bind to mitochondrial DNA D-loops and contribute to nucleoid stability. Required for enhanced channeling of cholesterol for hormone-dependent steroidogenesis. Involved in mitochondrial-mediated antiviral innate immunity. Required to protect mitochondria from the PERK-mediated unfolded protein response: specifically inhibits the activity of EIF2AK3/PERK at mitochondria-endoplasmic reticulum contact sites, thereby providing a safe haven for mitochondrial protein translation during endoplasmic reticulum stress. Ability to inhibit EIF2AK3/PERK is independent of its ATPase activity. Also involved in the mitochondrial DNA damage response by promoting signaling between damaged genomes and the mitochondrial membrane, leading to activation of the integrated stress response (ISR). The chain is ATPase family AAA domain-containing protein 3-B (atad3-b) from Xenopus laevis (African clawed frog).